Here is a 143-residue protein sequence, read N- to C-terminus: Large ribosomal subunit protein uL11 (143 aa).

Belongs to the universal ribosomal protein uL11 family. Part of the ribosomal stalk of the 50S ribosomal subunit. Interacts with L10 and the large rRNA to form the base of the stalk. L10 forms an elongated spine to which L12 dimers bind in a sequential fashion forming a multimeric L10(L12)X complex. In terms of processing, one or more lysine residues are methylated.

Forms part of the ribosomal stalk which helps the ribosome interact with GTP-bound translation factors. This Burkholderia cenocepacia (strain HI2424) protein is Large ribosomal subunit protein uL11.